We begin with the raw amino-acid sequence, 229 residues long: Cytidylate kinase (229 aa).

12 to 20 contacts ATP; sequence GPSGTGKSS.

This sequence belongs to the cytidylate kinase family. Type 1 subfamily.

It is found in the cytoplasm. It catalyses the reaction CMP + ATP = CDP + ADP. The enzyme catalyses dCMP + ATP = dCDP + ADP. In Rhodococcus opacus (strain B4), this protein is Cytidylate kinase.